The primary structure comprises 264 residues: Thymidylate synthase (264 aa).

DUMP contacts are provided by residues Arg-21 and 126–127; that span reads RR. Cys-146 acts as the Nucleophile in catalysis. Residues 166 to 169, Asn-177, and 207 to 209 contribute to the dUMP site; these read RSAD and HLY. Asp-169 provides a ligand contact to (6R)-5,10-methylene-5,6,7,8-tetrahydrofolate. (6R)-5,10-methylene-5,6,7,8-tetrahydrofolate is bound at residue Ala-263.

This sequence belongs to the thymidylate synthase family. Bacterial-type ThyA subfamily. In terms of assembly, homodimer.

It is found in the cytoplasm. It carries out the reaction dUMP + (6R)-5,10-methylene-5,6,7,8-tetrahydrofolate = 7,8-dihydrofolate + dTMP. It participates in pyrimidine metabolism; dTTP biosynthesis. In terms of biological role, catalyzes the reductive methylation of 2'-deoxyuridine-5'-monophosphate (dUMP) to 2'-deoxythymidine-5'-monophosphate (dTMP) while utilizing 5,10-methylenetetrahydrofolate (mTHF) as the methyl donor and reductant in the reaction, yielding dihydrofolate (DHF) as a by-product. This enzymatic reaction provides an intracellular de novo source of dTMP, an essential precursor for DNA biosynthesis. The sequence is that of Thymidylate synthase from Afipia carboxidovorans (strain ATCC 49405 / DSM 1227 / KCTC 32145 / OM5) (Oligotropha carboxidovorans).